Reading from the N-terminus, the 632-residue chain is MPIVTLPDGSQKTFDSPITVMQLAESIGTGLAKACVAGKIDGVPVDTADVIEHDAEVSILTPRDQEGLEIIRHSCAHLVGHAVKQLYPDAKMAIGPVIDDGFYYDIDFGQSVSPEDLEAIEKRMKVLIDHEYEVIREYVTKEQALATFIDRDEPYKQEIVEGIADGETVRLYHHEEYIDMCRGPHVPNTRHLKAFKLTKLAGAYWRGDANKPMLTRIYGTAWADKKALKTYLKRLEEAEKRDHRKLARKLDFFHMQEEAPGMVFWHPRGWTLWQTVEQYMRGVYKDSGYQEIRCPQIMDVSLWQKSGHWDNYAENMFFTESEKREYALKPMNCPGHVQVFNSGLRSYRELPVRYGEFGGCHRNEPSGALHGIMRVRAFTQDDGHVFCTEEQIEPEVTAFHRQALAVYRDFGFDDIAVKIALRPEKRLGSDDNWDRAEEALRNALSRCDVEWEELPGEGAFYGPKIEYHMRDCLGREWQVGTMQVDFMMPTRLGAQYVAEDGSRQAPVMLHRAIVGSMERFIGILIEHYAGSMPLWLSPLQAVVLNITDAQREYAESVTQRLQKSGLRVKTDLRNEKIGFKIREHTLQKIPYLLVVGDKEVEAGAVAVRTRSGEDLGSLSVDALIARLQEEGV.

One can recognise a TGS domain in the interval 1–61; it reads MPIVTLPDGS…EHDAEVSILT (61 aa). The tract at residues 242 to 533 is catalytic; that stretch reads DHRKLARKLD…LIEHYAGSMP (292 aa). Residues cysteine 333, histidine 384, and histidine 510 each coordinate Zn(2+).

Belongs to the class-II aminoacyl-tRNA synthetase family. Homodimer. The cofactor is Zn(2+).

The protein localises to the cytoplasm. It carries out the reaction tRNA(Thr) + L-threonine + ATP = L-threonyl-tRNA(Thr) + AMP + diphosphate + H(+). In terms of biological role, catalyzes the attachment of threonine to tRNA(Thr) in a two-step reaction: L-threonine is first activated by ATP to form Thr-AMP and then transferred to the acceptor end of tRNA(Thr). Also edits incorrectly charged L-seryl-tRNA(Thr). In Chromohalobacter salexigens (strain ATCC BAA-138 / DSM 3043 / CIP 106854 / NCIMB 13768 / 1H11), this protein is Threonine--tRNA ligase.